A 305-amino-acid polypeptide reads, in one-letter code: UPF0612 protein C337.02c (305 aa).

Coiled-coil stretches lie at residues 27–63 and 120–207; these read IERY…MKYE and NDMN…DARS.

It belongs to the UPF0612 family.

The polypeptide is UPF0612 protein C337.02c (Schizosaccharomyces pombe (strain 972 / ATCC 24843) (Fission yeast)).